Consider the following 103-residue polypeptide: MNNSEFSKIAETTIAYIAEKIEEQDKEASIDVDLQGDILNLDTDKGVYVINKQSAAKEIWLSSPVSGPYHFCYEQGKWTNRAGLELMAILTEELNIKFDTRPT.

The protein belongs to the frataxin family.

Its function is as follows. Involved in iron-sulfur (Fe-S) cluster assembly. May act as a regulator of Fe-S biogenesis. This chain is Iron-sulfur cluster assembly protein CyaY, found in Rickettsia peacockii (strain Rustic).